A 1193-amino-acid chain; its full sequence is Protogenin (1193 aa).

An N-terminal signal peptide occupies residues 1–23 (MAPPVRPGMLPLLLLLLLPPLGS). Ig-like domains follow at residues 24-124 (VPGV…AHLT), 126-217 (STIS…ASLT), 230-317 (PTII…ATLT), and 322-406 (PSFV…ARLT). The Extracellular segment spans residues 24 to 944 (VPGVWSFSEL…YYHLDQKSMT (921 aa)). Cystine bridges form between C54–C107 and C150–C200. A glycan (N-linked (GlcNAc...) asparagine) is linked at N84. N-linked (GlcNAc...) asparagine glycosylation occurs at N238. 2 disulfide bridges follow: C251-C299 and C343-C390. Fibronectin type-III domains are found at residues 416–510 (APYN…TLED), 512–608 (PLRP…TPKA), 613–712 (APKS…VRDR), 719–812 (PPHH…TLPE), and 817–912 (PPVG…VLPK). N625 is a glycosylation site (N-linked (GlcNAc...) asparagine). A helical transmembrane segment spans residues 945-965 (GIAVGVGIALTCILICVLILI). Residues 966–1193 (YRSKARKSSA…LRHAAESVPV (228 aa)) lie on the Cytoplasmic side of the membrane. Disordered stretches follow at residues 974 to 1018 (SASK…PMMP) and 1078 to 1193 (VLIS…SVPV). Composition is skewed to polar residues over residues 978-990 (TTQSGTQPLSRAS) and 1086-1095 (PSSPGQTTSF). Residues 1105–1133 (DTEHSANSEGSHETGDSGRFSHESNDEIH) show a composition bias toward basic and acidic residues. Positions 1136 to 1150 (SVISSTPPTSNSLTC) are enriched in polar residues.

This sequence belongs to the immunoglobulin superfamily. DCC family.

The protein resides in the membrane. Functionally, may play a role in anteroposterior axis elongation. This Rattus norvegicus (Rat) protein is Protogenin.